A 215-amino-acid chain; its full sequence is Large ribosomal subunit protein mL43 (215 aa).

The protein belongs to the mitochondrion-specific ribosomal protein mL43 family. As to quaternary structure, component of the mitochondrial large ribosomal subunit (mt-LSU). Mature mammalian 55S mitochondrial ribosomes consist of a small (28S) and a large (39S) subunit. The 28S small subunit contains a 12S ribosomal RNA (12S mt-rRNA) and 30 different proteins. The 39S large subunit contains a 16S rRNA (16S mt-rRNA), a copy of mitochondrial valine transfer RNA (mt-tRNA(Val)), which plays an integral structural role, and 52 different proteins. As to expression, high relative levels in skeletal muscle and testis. Lower levels of expression in the heart, brain, placenta, lung, liver, kidney, pancreas, spleen, thymus, prostate, ovary, small intestine, colon and leukocytes. Expression is coregulated with TWNK.

The protein resides in the mitochondrion. The polypeptide is Large ribosomal subunit protein mL43 (MRPL43) (Homo sapiens (Human)).